The sequence spans 1673 residues: NBPF family member NBPF26 (1673 aa).

4 consecutive EGF-like domains span residues 24-63 (HALQ…EYCQ), 64-102 (HRDP…EDCQ), 105-143 (TPHP…KECQ), and 144-180 (WTDA…QKCE). Cystine bridges form between Cys28–Cys41, Cys35–Cys51, Cys53–Cys62, Cys68–Cys79, Cys73–Cys90, Cys92–Cys101, Cys109–Cys121, Cys115–Cys131, Cys133–Cys142, Cys148–Cys159, Cys153–Cys168, Cys170–Cys179, Cys186–Cys198, Cys192–Cys207, Cys209–Cys218, Cys225–Cys236, and Cys230–Cys246. The EGF-like 5; calcium-binding domain occupies 182-219 (DVNECDIPGHCQHGGTCLNLPGSYQCQCLQGFTGQYCD). Residues 221–258 (LYVPCAHSPCVNGGTCRQTGDFTFECNCLPVPDSTSSA) enclose the EGF-like 6 domain. The stretch at 337-381 (RQFKEEKLAEQLKQAEELRQYKVLVHSQERELTQLKEKLREGRDA) forms a coiled coil. Disordered stretches follow at residues 423-463 (KLSP…KVPE), 713-734 (EKVQ…EVPE), and 782-828 (WEDA…EGYS). Residues 427–443 (ENDEDEDEDVQVEEDEK) show a composition bias toward acidic residues. Olduvai domains lie at 427-521 (ENDE…NILP), 698-790 (ENDN…HIIP), 791-879 (ENES…ATGP), 882-937 (SREL…VDMD), 938-1029 (EIEK…PSCP), 1032-1104 (SGEL…PSCP), 1107-1162 (SREL…LDVD), 1163-1255 (RIKK…RSKK), 1256-1348 (ERRR…PSCP), 1351-1423 (SREL…PSCP), 1426-1481 (SREL…LDVD), 1482-1574 (RIKK…RSKK), and 1575-1673 (ERRR…IFPQ). Positions 452 to 463 (EVQKTEESKVPE) are enriched in basic and acidic residues. 2 stretches are compositionally biased toward acidic residues: residues 792–801 (NESDDEEEEE) and 812–824 (ESEE…ESWD). The interval 1242-1280 (KGKGKKRRGRRSKKERRRGRKEGEEDQNPPCPRLSRELL) is disordered. Basic residues predominate over residues 1243–1261 (GKGKKRRGRRSKKERRRGR). The segment at 1561–1594 (KGKGKKRRGRRSKKERRRGRKEGEEDQNPPCPRL) is disordered. The span at 1562–1580 (GKGKKRRGRRSKKERRRGR) shows a compositional bias: basic residues.

This sequence belongs to the NBPF family.

It localises to the cytoplasm. In Homo sapiens (Human), this protein is NBPF family member NBPF26.